Here is a 353-residue protein sequence, read N- to C-terminus: sn-glycerol-3-phosphate import ATP-binding protein UgpC (353 aa).

In terms of domain architecture, ABC transporter spans 4–234; sequence ILLNDVRKSY…PASEFVAGFI (231 aa). 36–43 contacts ATP; the sequence is GPSGCGKS.

It belongs to the ABC transporter superfamily. sn-glycerol-3-phosphate importer (TC 3.A.1.1.3) family. The complex is composed of two ATP-binding proteins (UgpC), two transmembrane proteins (UgpA and UgpE) and a solute-binding protein (UgpB).

It is found in the cell inner membrane. The enzyme catalyses sn-glycerol 3-phosphate(out) + ATP + H2O = sn-glycerol 3-phosphate(in) + ADP + phosphate + H(+). In terms of biological role, part of the ABC transporter complex UgpBAEC involved in sn-glycerol-3-phosphate (G3P) import. Responsible for energy coupling to the transport system. The protein is sn-glycerol-3-phosphate import ATP-binding protein UgpC of Paracoccus denitrificans (strain Pd 1222).